A 363-amino-acid polypeptide reads, in one-letter code: UDP-N-acetylglucosamine--N-acetylmuramyl-(pentapeptide) pyrophosphoryl-undecaprenol N-acetylglucosamine transferase (363 aa).

Residues 14-16, Arg-171, Ser-200, and Gln-290 each bind UDP-N-acetyl-alpha-D-glucosamine; that span reads TGG.

Belongs to the glycosyltransferase 28 family. MurG subfamily.

It localises to the cell inner membrane. It carries out the reaction di-trans,octa-cis-undecaprenyl diphospho-N-acetyl-alpha-D-muramoyl-L-alanyl-D-glutamyl-meso-2,6-diaminopimeloyl-D-alanyl-D-alanine + UDP-N-acetyl-alpha-D-glucosamine = di-trans,octa-cis-undecaprenyl diphospho-[N-acetyl-alpha-D-glucosaminyl-(1-&gt;4)]-N-acetyl-alpha-D-muramoyl-L-alanyl-D-glutamyl-meso-2,6-diaminopimeloyl-D-alanyl-D-alanine + UDP + H(+). It participates in cell wall biogenesis; peptidoglycan biosynthesis. Functionally, cell wall formation. Catalyzes the transfer of a GlcNAc subunit on undecaprenyl-pyrophosphoryl-MurNAc-pentapeptide (lipid intermediate I) to form undecaprenyl-pyrophosphoryl-MurNAc-(pentapeptide)GlcNAc (lipid intermediate II). In Borrelia garinii subsp. bavariensis (strain ATCC BAA-2496 / DSM 23469 / PBi) (Borreliella bavariensis), this protein is UDP-N-acetylglucosamine--N-acetylmuramyl-(pentapeptide) pyrophosphoryl-undecaprenol N-acetylglucosamine transferase.